Reading from the N-terminus, the 428-residue chain is Glutamate-1-semialdehyde 2,1-aminomutase (428 aa).

Position 265 is an N6-(pyridoxal phosphate)lysine (K265).

It belongs to the class-III pyridoxal-phosphate-dependent aminotransferase family. HemL subfamily. Homodimer. The cofactor is pyridoxal 5'-phosphate.

It localises to the cytoplasm. It carries out the reaction (S)-4-amino-5-oxopentanoate = 5-aminolevulinate. The protein operates within porphyrin-containing compound metabolism; protoporphyrin-IX biosynthesis; 5-aminolevulinate from L-glutamyl-tRNA(Glu): step 2/2. In Shewanella loihica (strain ATCC BAA-1088 / PV-4), this protein is Glutamate-1-semialdehyde 2,1-aminomutase.